The sequence spans 218 residues: Glutathione S-transferase Mu 1 (218 aa).

The 87-residue stretch at 2–88 (PMILGYWDIR…YIARKHNLCG (87 aa)) folds into the GST N-terminal domain. 7-8 (YW) contributes to the glutathione binding site. A Phosphothreonine modification is found at T34. Glutathione-binding positions include 43–46 (RSQW), K50, 59–60 (NL), and 72–73 (QS). Residues 90–208 (TEEEKIRVDI…KSSRFLPRPV (119 aa)) form the GST C-terminal domain. Residue Y116 coordinates substrate. Phosphoserine is present on S210.

It belongs to the GST superfamily. Mu family. As to quaternary structure, homodimer. As to expression, liver (at protein level).

It is found in the cytoplasm. The enzyme catalyses RX + glutathione = an S-substituted glutathione + a halide anion + H(+). It carries out the reaction prostaglandin A2 + glutathione = prostaglandin A2-S-(R)-glutathione. It catalyses the reaction prostaglandin J2 + glutathione = prostaglandin J2-S-(R)-glutathione. The catalysed reaction is prostaglandin J2 + glutathione = prostaglandin J2-S-(S)-glutathione. The enzyme catalyses prostaglandin A2 + glutathione = prostaglandin A2-S-(S)-glutathione. It carries out the reaction 11(S)-hydroxy-14(S),15(S)-epoxy-(5Z,8Z,12E)-eicosatrienoate + glutathione = (11S,15S)-dihydroxy-14(R)-S-glutathionyl-(5Z,8Z,12E)-eicosatrienoate. Its function is as follows. Conjugation of reduced glutathione to a wide number of exogenous and endogenous hydrophobic electrophiles. Involved in the formation of glutathione conjugates of both prostaglandin A2 (PGA2) and prostaglandin J2 (PGJ2). Participates in the formation of novel hepoxilin regioisomers. This chain is Glutathione S-transferase Mu 1, found in Homo sapiens (Human).